Reading from the N-terminus, the 455-residue chain is Golgi pH regulator (455 aa).

The next 5 membrane-spanning stretches (helical) occupy residues 5 to 25, 46 to 66, 79 to 99, 114 to 134, and 150 to 170; these read IDSSIMITSQILFFGFGWLFF, VTFAFSCTMFELIIFEILGVL, LCVILLILVFMVPFYIGYFIV, CLLWLTFMYFFWKLGDPFPIL, and VGVIGVTLMALLSGFGAVNCP. N-linked (GlcNAc...) asparagine glycosylation is found at asparagine 180 and asparagine 243. Transmembrane regions (helical) follow at residues 290–310, 343–363, 378–398, and 425–445; these read GYFFSIYCVWKIFMATINIVF, ISFILVGIIIVTSIRGLLITL, VIVLLLAQIMGMYFVSSVLLI, and WFDVIFLVSALSSILFLYLAH.

This sequence belongs to the Golgi pH regulator (TC 1.A.38) family. In terms of assembly, homotrimer. Interacts with RABL3; the interaction stabilizes GPR89A.

It is found in the golgi apparatus membrane. The catalysed reaction is iodide(out) = iodide(in). It carries out the reaction chloride(in) = chloride(out). The enzyme catalyses bromide(in) = bromide(out). It catalyses the reaction fluoride(in) = fluoride(out). Voltage-gated channel that enables the transfer of monoatomic anions such as iodide, chloride, bromide and fluoride which may function in counter-ion conductance and participates in Golgi acidification. Plays a role in lymphocyte development, probably by acting as a RABL3 effector in hematopoietic cells. This is Golgi pH regulator from Bos taurus (Bovine).